The chain runs to 86 residues: uncharacterized protein (86 aa).

Positions 1 to 22 are cleaved as a signal peptide; the sequence is MKTINTVVAAMALSTLSFGVFA.

This sequence belongs to the BhsA/McbA family.

The protein localises to the periplasm. This is an uncharacterized protein from Escherichia coli O6:H1 (strain CFT073 / ATCC 700928 / UPEC).